A 268-amino-acid chain; its full sequence is Ribosomal RNA small subunit methyltransferase A (268 aa).

Positions 16, 18, 43, 64, 89, and 110 each coordinate S-adenosyl-L-methionine.

Belongs to the class I-like SAM-binding methyltransferase superfamily. rRNA adenine N(6)-methyltransferase family. RsmA subfamily.

The protein resides in the cytoplasm. It carries out the reaction adenosine(1518)/adenosine(1519) in 16S rRNA + 4 S-adenosyl-L-methionine = N(6)-dimethyladenosine(1518)/N(6)-dimethyladenosine(1519) in 16S rRNA + 4 S-adenosyl-L-homocysteine + 4 H(+). Functionally, specifically dimethylates two adjacent adenosines (A1518 and A1519) in the loop of a conserved hairpin near the 3'-end of 16S rRNA in the 30S particle. May play a critical role in biogenesis of 30S subunits. In Pseudomonas savastanoi pv. phaseolicola (strain 1448A / Race 6) (Pseudomonas syringae pv. phaseolicola (strain 1448A / Race 6)), this protein is Ribosomal RNA small subunit methyltransferase A.